A 531-amino-acid polypeptide reads, in one-letter code: Cation transporter HKT1;3 (531 aa).

Over 1 to 46 the chain is Cytoplasmic; that stretch reads MNHCLVVSHKKLQTFRTFAASKFSSFTKSAQKSIKYSFQFIYQNNP. Helical transmembrane passes span 47–67 and 108–128; these read LFVH…SLKV and LWVL…MLGI. The Cytoplasmic segment spans residues 129–190; the sequence is HFMRAEFGTK…GGHVEPKTIK (62 aa). 2 consecutive transmembrane segments (helical) span residues 191-211 and 264-284; these read FLGF…SLLI and ILLL…APCL. Residues 285–321 lie on the Cytoplasmic side of the membrane; sequence RLMVWSLEKITGKKDCRYILEYPKAIGYKHLMSTRES. A run of 2 helical transmembrane segments spans residues 322-342 and 383-403; these read VYLT…FLSL and SAIL…SFLP. Over 404–421 the chain is Cytoplasmic; sequence RHDGEDSKTEKINKRKGL. 2 helical membrane-spanning segments follow: residues 422 to 442 and 494 to 514; these read LENW…LICI and YGFA…VMLF. The Cytoplasmic portion of the chain corresponds to 515 to 530; the sequence is GRLKTFNMKGGRAWKL.

This sequence belongs to the TrkH potassium transport family. HKT (TC 2.A.38.3) subfamily. Interacts with CNIH1. Weakly expressed. In roots, expressed in epidermis, exodermis, cortex, and sieve elements and companion cells of phloem. In mature leaves, expressed in large highly vacuolated cells of the adaxial epidermis, phloem and xylem.

Its subcellular location is the endoplasmic reticulum membrane. It is found in the golgi apparatus membrane. It carries out the reaction Na(+)(in) = Na(+)(out). Functions as a highly-selective sodium transporter. Does not seem to function as sodium-potassium cotransporter. May be involved in turgor changes for rolling and unrolling of leaves in response to environmental variations. The chain is Cation transporter HKT1;3 from Oryza sativa subsp. japonica (Rice).